The sequence spans 388 residues: Succinate--CoA ligase [ADP-forming] subunit beta (388 aa).

Residues 9 to 244 (KEILRKYNVP…LDEEDANEIE (236 aa)) form the ATP-grasp domain. ATP contacts are provided by residues Lys-46, 53 to 55 (GRG), Glu-99, Ala-102, and Glu-107. Positions 199 and 213 each coordinate Mg(2+). Substrate-binding positions include Asn-264 and 321 to 323 (GIM).

This sequence belongs to the succinate/malate CoA ligase beta subunit family. In terms of assembly, heterotetramer of two alpha and two beta subunits. The cofactor is Mg(2+).

It catalyses the reaction succinate + ATP + CoA = succinyl-CoA + ADP + phosphate. The catalysed reaction is GTP + succinate + CoA = succinyl-CoA + GDP + phosphate. Its pathway is carbohydrate metabolism; tricarboxylic acid cycle; succinate from succinyl-CoA (ligase route): step 1/1. Functionally, succinyl-CoA synthetase functions in the citric acid cycle (TCA), coupling the hydrolysis of succinyl-CoA to the synthesis of either ATP or GTP and thus represents the only step of substrate-level phosphorylation in the TCA. The beta subunit provides nucleotide specificity of the enzyme and binds the substrate succinate, while the binding sites for coenzyme A and phosphate are found in the alpha subunit. The polypeptide is Succinate--CoA ligase [ADP-forming] subunit beta (Cupriavidus necator (strain ATCC 17699 / DSM 428 / KCTC 22496 / NCIMB 10442 / H16 / Stanier 337) (Ralstonia eutropha)).